The sequence spans 337 residues: Glyceraldehyde-3-phosphate dehydrogenase (337 aa).

Residues 12-13 (RI), Asp34, and Arg79 each bind NAD(+). D-glyceraldehyde 3-phosphate-binding positions include 150–152 (SCT), Thr181, 210–211 (TG), and Arg233. Cys151 functions as the Nucleophile in the catalytic mechanism. Residue Asn315 participates in NAD(+) binding.

It belongs to the glyceraldehyde-3-phosphate dehydrogenase family. In terms of assembly, homotetramer.

The protein localises to the cytoplasm. It carries out the reaction D-glyceraldehyde 3-phosphate + phosphate + NAD(+) = (2R)-3-phospho-glyceroyl phosphate + NADH + H(+). It functions in the pathway carbohydrate degradation; glycolysis; pyruvate from D-glyceraldehyde 3-phosphate: step 1/5. This chain is Glyceraldehyde-3-phosphate dehydrogenase (GPD-1), found in Claviceps purpurea (strain 20.1) (Ergot fungus).